Reading from the N-terminus, the 191-residue chain is Protein RER1A (191 aa).

N-acetylmethionine is present on Met1. 4 helical membrane passes run 39-57 (YRWI…RVYY), 60-80 (GFYI…IGFL), 115-135 (FKFW…TFFS), and 136-156 (VFDV…LFVL).

The protein belongs to the RER1 family.

The protein localises to the membrane. In terms of biological role, involved in the retrieval of endoplasmic reticulum membrane proteins from the early Golgi compartment. The sequence is that of Protein RER1A (RER1A) from Arabidopsis thaliana (Mouse-ear cress).